The sequence spans 448 residues: Tubulin beta chain (448 aa).

GTP-binding residues include Gln11, Glu69, Ser138, Gly142, Thr143, Gly144, Asn204, and Asn226. A Mg(2+)-binding site is contributed by Glu69. The segment at 426-448 is disordered; it reads QDAGIDEEEEEYEEEAPVDEPLE. Positions 429 to 448 are enriched in acidic residues; it reads GIDEEEEEYEEEAPVDEPLE.

The protein belongs to the tubulin family. In terms of assembly, dimer of alpha and beta chains. A typical microtubule is a hollow water-filled tube with an outer diameter of 25 nm and an inner diameter of 15 nM. Alpha-beta heterodimers associate head-to-tail to form protofilaments running lengthwise along the microtubule wall with the beta-tubulin subunit facing the microtubule plus end conferring a structural polarity. Microtubules usually have 13 protofilaments but different protofilament numbers can be found in some organisms and specialized cells. Mg(2+) is required as a cofactor.

Its subcellular location is the cytoplasm. The protein localises to the cytoskeleton. In terms of biological role, tubulin is the major constituent of microtubules, a cylinder consisting of laterally associated linear protofilaments composed of alpha- and beta-tubulin heterodimers. Microtubules grow by the addition of GTP-tubulin dimers to the microtubule end, where a stabilizing cap forms. Below the cap, tubulin dimers are in GDP-bound state, owing to GTPase activity of alpha-tubulin. The sequence is that of Tubulin beta chain (TUB2) from Epichloe coenophiala (Tall fescue endophyte fungus).